Here is a 212-residue protein sequence, read N- to C-terminus: ATP phosphoribosyltransferase (212 aa).

It belongs to the ATP phosphoribosyltransferase family. Short subfamily. In terms of assembly, heteromultimer composed of HisG and HisZ subunits.

It is found in the cytoplasm. The enzyme catalyses 1-(5-phospho-beta-D-ribosyl)-ATP + diphosphate = 5-phospho-alpha-D-ribose 1-diphosphate + ATP. It participates in amino-acid biosynthesis; L-histidine biosynthesis; L-histidine from 5-phospho-alpha-D-ribose 1-diphosphate: step 1/9. In terms of biological role, catalyzes the condensation of ATP and 5-phosphoribose 1-diphosphate to form N'-(5'-phosphoribosyl)-ATP (PR-ATP). Has a crucial role in the pathway because the rate of histidine biosynthesis seems to be controlled primarily by regulation of HisG enzymatic activity. The sequence is that of ATP phosphoribosyltransferase from Albidiferax ferrireducens (strain ATCC BAA-621 / DSM 15236 / T118) (Rhodoferax ferrireducens).